Consider the following 25-residue polypeptide: Panurgine R (25 aa).

Disulfide bonds link Cys-8-Cys-23 and Cys-11-Cys-19.

The protein localises to the target cell membrane. It localises to the secreted. Functionally, antimicrobial peptide active against Gram-positive bacteria M.luteus (MIC=0.8 uM) and B.subtilis (MIC=1.5 uM). Less active against Gram-negative bacteria E.coli (MIC=32.5 uM) and yeast C.albicans (MIC=18.7 uM). Not active against S.aureus and P.aeruginosa. Has no hemolytic activity against human erythrocytes. Probably acts by disrupting membranes of target cells. In Panurgus calcaratus (Solitary bee), this protein is Panurgine R.